A 339-amino-acid chain; its full sequence is Transmembrane protein 120B (339 aa).

Residues 1–77 (MSGQLERCER…ASREEAELVQ (77 aa)) adopt a coiled-coil conformation. 6 helical membrane passes run 102–124 (GLYL…AKFA), 132–152 (FKLY…FFLH), 159–179 (VFNF…SILI), 187–207 (GWWV…LTWP), 270–290 (FLLP…VTLF), and 302–322 (QVFV…LTTL).

Belongs to the TMEM120 family. As to quaternary structure, heterooligomer with TMEM120A.

Its subcellular location is the nucleus inner membrane. In terms of biological role, necessary for efficient adipogenesis. Does not show ion channel activity. This is Transmembrane protein 120B (TMEM120B) from Bos taurus (Bovine).